The sequence spans 293 residues: Fructose-bisphosphate aldolase (293 aa).

D-glyceraldehyde 3-phosphate is bound at residue serine 50. The active-site Proton donor is the aspartate 85. Zn(2+)-binding residues include histidine 86, aspartate 106, glutamate 136, and histidine 178. Glycine 179 contacts dihydroxyacetone phosphate. Histidine 208 contacts Zn(2+). Dihydroxyacetone phosphate-binding positions include 209–211 (GGS) and 230–233 (NVNT).

It belongs to the class II fructose-bisphosphate aldolase family. Requires Zn(2+) as cofactor.

It carries out the reaction beta-D-fructose 1,6-bisphosphate = D-glyceraldehyde 3-phosphate + dihydroxyacetone phosphate. Its pathway is carbohydrate degradation; glycolysis; D-glyceraldehyde 3-phosphate and glycerone phosphate from D-glucose: step 4/4. In terms of biological role, catalyzes the aldol condensation of dihydroxyacetone phosphate (DHAP or glycerone-phosphate) with glyceraldehyde 3-phosphate (G3P) to form fructose 1,6-bisphosphate (FBP) in gluconeogenesis and the reverse reaction in glycolysis. The polypeptide is Fructose-bisphosphate aldolase (fba) (Streptococcus pyogenes serotype M3 (strain ATCC BAA-595 / MGAS315)).